The primary structure comprises 443 residues: Thymidine phosphorylase (443 aa).

It belongs to the thymidine/pyrimidine-nucleoside phosphorylase family. As to quaternary structure, homodimer.

The catalysed reaction is thymidine + phosphate = 2-deoxy-alpha-D-ribose 1-phosphate + thymine. The protein operates within pyrimidine metabolism; dTMP biosynthesis via salvage pathway; dTMP from thymine: step 1/2. In terms of biological role, the enzymes which catalyze the reversible phosphorolysis of pyrimidine nucleosides are involved in the degradation of these compounds and in their utilization as carbon and energy sources, or in the rescue of pyrimidine bases for nucleotide synthesis. The polypeptide is Thymidine phosphorylase (Shewanella sp. (strain MR-4)).